Consider the following 365-residue polypeptide: tRNA(Met) cytidine acetate ligase (365 aa).

Residues 7 to 20 (IAEF…HKYL), Gly-96, Asn-152, and Arg-175 contribute to the ATP site.

Belongs to the TmcAL family.

It localises to the cytoplasm. The catalysed reaction is cytidine(34) in elongator tRNA(Met) + acetate + ATP = N(4)-acetylcytidine(34) in elongator tRNA(Met) + AMP + diphosphate. Functionally, catalyzes the formation of N(4)-acetylcytidine (ac(4)C) at the wobble position of elongator tRNA(Met), using acetate and ATP as substrates. First activates an acetate ion to form acetyladenylate (Ac-AMP) and then transfers the acetyl group to tRNA to form ac(4)C34. The polypeptide is tRNA(Met) cytidine acetate ligase (Streptococcus pneumoniae (strain ATCC BAA-255 / R6)).